The sequence spans 225 residues: 2-C-methyl-D-erythritol 4-phosphate cytidylyltransferase (225 aa).

Belongs to the IspD/TarI cytidylyltransferase family. IspD subfamily.

The enzyme catalyses 2-C-methyl-D-erythritol 4-phosphate + CTP + H(+) = 4-CDP-2-C-methyl-D-erythritol + diphosphate. Its pathway is isoprenoid biosynthesis; isopentenyl diphosphate biosynthesis via DXP pathway; isopentenyl diphosphate from 1-deoxy-D-xylulose 5-phosphate: step 2/6. Functionally, catalyzes the formation of 4-diphosphocytidyl-2-C-methyl-D-erythritol from CTP and 2-C-methyl-D-erythritol 4-phosphate (MEP). This is 2-C-methyl-D-erythritol 4-phosphate cytidylyltransferase from Haemophilus influenzae (strain PittGG).